A 347-amino-acid chain; its full sequence is Transcription elongation factor A protein 3 (347 aa).

Residues glutamate 5 to proline 82 form the TFIIS N-terminal domain. Residues arginine 83–glycine 100 are compositionally biased toward basic and acidic residues. Residues arginine 83–threonine 168 form a disordered region. Serine 113 carries the phosphoserine modification. The span at glycine 119–aspartate 131 shows a compositional bias: basic and acidic residues. Low complexity-rich tracts occupy residues serine 132–arginine 142 and threonine 157–threonine 168. At serine 139 the chain carries Phosphoserine. Residues valine 186–threonine 302 form the TFIIS central domain. The segment at aspartate 305–lysine 345 adopts a TFIIS-type zinc-finger fold. Positions 309, 312, 337, and 340 each coordinate Zn(2+).

Belongs to the TFS-II family. As to expression, liver, kidney and heart.

The protein resides in the nucleus. In terms of biological role, necessary for efficient RNA polymerase II transcription elongation past template-encoded arresting sites. The arresting sites in DNA have the property of trapping a certain fraction of elongating RNA polymerases that pass through, resulting in locked ternary complexes. Cleavage of the nascent transcript by S-II allows the resumption of elongation from the new 3'-terminus. This chain is Transcription elongation factor A protein 3 (Tcea3), found in Mus musculus (Mouse).